A 350-amino-acid polypeptide reads, in one-letter code: Biotin synthase (350 aa).

The region spanning 54 to 278 (REIQLSTLLS…TMPQSYVRLS (225 aa)) is the Radical SAM core domain. 3 residues coordinate [4Fe-4S] cluster: cysteine 69, cysteine 73, and cysteine 76. Positions 113, 144, 204, and 276 each coordinate [2Fe-2S] cluster.

Belongs to the radical SAM superfamily. Biotin synthase family. In terms of assembly, homodimer. [4Fe-4S] cluster serves as cofactor. Requires [2Fe-2S] cluster as cofactor.

It carries out the reaction (4R,5S)-dethiobiotin + (sulfur carrier)-SH + 2 reduced [2Fe-2S]-[ferredoxin] + 2 S-adenosyl-L-methionine = (sulfur carrier)-H + biotin + 2 5'-deoxyadenosine + 2 L-methionine + 2 oxidized [2Fe-2S]-[ferredoxin]. It functions in the pathway cofactor biosynthesis; biotin biosynthesis; biotin from 7,8-diaminononanoate: step 2/2. Its function is as follows. Catalyzes the conversion of dethiobiotin (DTB) to biotin by the insertion of a sulfur atom into dethiobiotin via a radical-based mechanism. The polypeptide is Biotin synthase (Neisseria meningitidis serogroup C / serotype 2a (strain ATCC 700532 / DSM 15464 / FAM18)).